The primary structure comprises 453 residues: Na(+)/H(+) antiporter NhaA (453 aa).

Transmembrane regions (helical) follow at residues 28–48, 79–99, 115–135, 144–164, 173–193, 196–216, 241–261, 321–341, 355–375, 393–413, and 424–444; these read FLHI…AALI, LHFL…GMEI, ALPL…YFIL, GWAV…ALLG, VFLL…IAVF, GGMD…VLGM, TGAH…VFAP, VAFG…LDGI, VLIA…FLMV, LVGL…TLAF, and LGIL…GFFQ.

The protein belongs to the NhaA Na(+)/H(+) (TC 2.A.33) antiporter family.

The protein resides in the cell inner membrane. The enzyme catalyses Na(+)(in) + 2 H(+)(out) = Na(+)(out) + 2 H(+)(in). Na(+)/H(+) antiporter that extrudes sodium in exchange for external protons. In Janthinobacterium sp. (strain Marseille) (Minibacterium massiliensis), this protein is Na(+)/H(+) antiporter NhaA.